Here is a 1657-residue protein sequence, read N- to C-terminus: Alsin (1657 aa).

RCC1 repeat units lie at residues 60-109, 110-168, and 169-219; these read GEVY…VTDN, GVAY…LSIS, and REIW…LVQC. A disordered region spans residues 432–481; the sequence is TGAQAGSSAIGPEGLKDSREEQVKQESMQGKKSSSLVDIREEETEGGSRR. A compositionally biased stretch (basic and acidic residues) spans 445–455; sequence GLKDSREEQVK. A compositionally biased stretch (polar residues) spans 456–467; it reads QESMQGKKSSSL. Phosphoserine is present on residues serine 465, serine 466, serine 483, and serine 492. Threonine 510 carries the phosphothreonine modification. 2 RCC1 repeats span residues 526–577 and 578–628; these read TEVW…LTAK and SQVY…LVDT. Lysine 533 is modified (N6-acetyllysine). The 196-residue stretch at 690 to 885 folds into the DH domain; it reads GYIASLHELA…ECLALHLGRK (196 aa). Residues 901-1007 enclose the PH domain; the sequence is GKMTDSLRKP…RAISQAVDQA (107 aa). 8 MORN repeats span residues 1049-1071, 1072-1094, 1100-1122, 1123-1145, 1151-1173, 1175-1197, 1198-1220, and 1221-1244; these read YDGRWLSGKPHGRGVLKWPDGKM, YSGMFRNGLEDGYGEYRIPNKAM, YVGHWKEGKMCGQGVYSYASGEV, FEGCFQDNMRHGHGLLRSGKLTS, FIGQWVMDKKAGYGVFDDITRGE, YMGMWQDDVCQGNGVVVTQFGLY, YEGNFHLNKMMGNGVLLSEDDTI, and YEGEFSDDWTLSGKGTLTMPNGDY. Phosphoserine is present on serine 1335. Positions 1513-1657 constitute a VPS9 domain; the sequence is KQPDIALLGF…YYQIQREKLN (145 aa).

In terms of assembly, forms a heteromeric complex with ALS2CL. Interacts with ALS2CL.

Its function is as follows. May act as a GTPase regulator. Controls survival and growth of spinal motoneurons. The sequence is that of Alsin (ALS2) from Pan troglodytes (Chimpanzee).